Consider the following 195-residue polypeptide: Imidazole glycerol phosphate synthase subunit HisH 2 (195 aa).

The 194-residue stretch at 2 to 195 (KIIIIDTACA…LISNFIKDIG (194 aa)) folds into the Glutamine amidotransferase type-1 domain. The active-site Nucleophile is Cys-77. Residues His-175 and Glu-177 contribute to the active site.

In terms of assembly, heterodimer of HisH and HisF.

It localises to the cytoplasm. The enzyme catalyses 5-[(5-phospho-1-deoxy-D-ribulos-1-ylimino)methylamino]-1-(5-phospho-beta-D-ribosyl)imidazole-4-carboxamide + L-glutamine = D-erythro-1-(imidazol-4-yl)glycerol 3-phosphate + 5-amino-1-(5-phospho-beta-D-ribosyl)imidazole-4-carboxamide + L-glutamate + H(+). It catalyses the reaction L-glutamine + H2O = L-glutamate + NH4(+). It functions in the pathway amino-acid biosynthesis; L-histidine biosynthesis; L-histidine from 5-phospho-alpha-D-ribose 1-diphosphate: step 5/9. In terms of biological role, IGPS catalyzes the conversion of PRFAR and glutamine to IGP, AICAR and glutamate. The HisH subunit provides the glutamine amidotransferase activity that produces the ammonia necessary to HisF for the synthesis of IGP and AICAR. The chain is Imidazole glycerol phosphate synthase subunit HisH 2 (hisH2) from Campylobacter jejuni subsp. jejuni serotype O:2 (strain ATCC 700819 / NCTC 11168).